The primary structure comprises 331 residues: MPESQDIISQSIPSLTQFLGEEQARFPNIPTAIPIIIQAMATSARFISKAVVQSMIDKDVSFTESLNCSGDTQQKLDIVAQSFFLEALEATHEVCAVISEEADSVVPLRNKNARYIVALDPLDGSSNINVNSPIGTLFSIYQRISPSETPIQDADVLIPGKQQLAAGYMLYSTVNTLVYATIYGVHGFTYDPTVNQFFLTHPALRMPENGITYAINHSYLHTFPHYIQNYIAYCRRQELTSRYTGALVADFHRHLLEGGIYLYPPTYKRPKGKLRLMFECNVLAFIAEQAGGLATDGKQPILNIIPRHIHQCVPFYIGSKTMVKNLLNCVG.

Positions 100, 120, 122, and 123 each coordinate Mg(2+). Substrate is bound by residues 123–126 (DGSS), asparagine 216, tyrosine 243, 261–263 (YLY), and lysine 273. Glutamate 279 is a binding site for Mg(2+).

This sequence belongs to the FBPase class 1 family. Homotetramer. Requires Mg(2+) as cofactor.

It is found in the cytoplasm. The catalysed reaction is beta-D-fructose 1,6-bisphosphate + H2O = beta-D-fructose 6-phosphate + phosphate. The protein operates within carbohydrate biosynthesis; gluconeogenesis. The polypeptide is Fructose-1,6-bisphosphatase class 1 (Amoebophilus asiaticus (strain 5a2)).